Consider the following 412-residue polypeptide: Serine hydroxymethyltransferase (412 aa).

Residues L117 and 121–123 (GHL) contribute to the (6S)-5,6,7,8-tetrahydrofolate site. K226 is modified (N6-(pyridoxal phosphate)lysine).

Belongs to the SHMT family. As to quaternary structure, homodimer. The cofactor is pyridoxal 5'-phosphate.

The protein resides in the cytoplasm. It catalyses the reaction (6R)-5,10-methylene-5,6,7,8-tetrahydrofolate + glycine + H2O = (6S)-5,6,7,8-tetrahydrofolate + L-serine. It participates in one-carbon metabolism; tetrahydrofolate interconversion. It functions in the pathway amino-acid biosynthesis; glycine biosynthesis; glycine from L-serine: step 1/1. Its function is as follows. Catalyzes the reversible interconversion of serine and glycine with tetrahydrofolate (THF) serving as the one-carbon carrier. This reaction serves as the major source of one-carbon groups required for the biosynthesis of purines, thymidylate, methionine, and other important biomolecules. Also exhibits THF-independent aldolase activity toward beta-hydroxyamino acids, producing glycine and aldehydes, via a retro-aldol mechanism. This chain is Serine hydroxymethyltransferase, found in Symbiobacterium thermophilum (strain DSM 24528 / JCM 14929 / IAM 14863 / T).